The sequence spans 437 residues: UDP-N-acetylmuramoylalanine--D-glutamate ligase (437 aa).

An ATP-binding site is contributed by 112-118 (GSNGKST).

The protein belongs to the MurCDEF family.

The protein resides in the cytoplasm. It catalyses the reaction UDP-N-acetyl-alpha-D-muramoyl-L-alanine + D-glutamate + ATP = UDP-N-acetyl-alpha-D-muramoyl-L-alanyl-D-glutamate + ADP + phosphate + H(+). Its pathway is cell wall biogenesis; peptidoglycan biosynthesis. Functionally, cell wall formation. Catalyzes the addition of glutamate to the nucleotide precursor UDP-N-acetylmuramoyl-L-alanine (UMA). In Haemophilus influenzae (strain PittGG), this protein is UDP-N-acetylmuramoylalanine--D-glutamate ligase.